Reading from the N-terminus, the 386-residue chain is N-acetylneuraminate epimerase (386 aa).

The first 29 residues, 1–29 (MGMQMKNFKKMMTLMALCLSVAITTSGYA), serve as a signal peptide directing secretion. Kelch repeat units follow at residues 51-95 (VIYV…VFLN), 97-149 (ELYV…VKLN), 151-186 (TMVL…KVIY), 187-232 (NYFN…VMEN), 235-284 (LMLI…LAGA), 306-355 (QNYT…SYGD), and 357-386 (VFLI…LLIK). Glutamate 241 functions as the Proton acceptor in the catalytic mechanism.

Belongs to the NanM family. As to quaternary structure, homodimer.

The protein resides in the periplasm. It catalyses the reaction N-acetyl-alpha-neuraminate = N-acetyl-beta-neuraminate. Functionally, converts alpha-N-acetylneuranimic acid (Neu5Ac) to the beta-anomer, accelerating the equilibrium between the alpha- and beta-anomers. Probably facilitates sialidase-negative bacteria to compete successfully for limited amounts of extracellular Neu5Ac, which is likely taken up in the beta-anomer. In addition, the rapid removal of sialic acid from solution might be advantageous to the bacterium to damp down host responses. In Salmonella choleraesuis (strain SC-B67), this protein is N-acetylneuraminate epimerase.